The primary structure comprises 357 residues: Ribosomal RNA large subunit methyltransferase M (357 aa).

Residues serine 190, 223-226 (APGG), aspartate 242, aspartate 262, and aspartate 278 each bind S-adenosyl-L-methionine. Lysine 307 acts as the Proton acceptor in catalysis.

It belongs to the class I-like SAM-binding methyltransferase superfamily. RNA methyltransferase RlmE family. RlmM subfamily. In terms of assembly, monomer.

The protein resides in the cytoplasm. It catalyses the reaction cytidine(2498) in 23S rRNA + S-adenosyl-L-methionine = 2'-O-methylcytidine(2498) in 23S rRNA + S-adenosyl-L-homocysteine + H(+). Catalyzes the 2'-O-methylation at nucleotide C2498 in 23S rRNA. The chain is Ribosomal RNA large subunit methyltransferase M from Chromohalobacter salexigens (strain ATCC BAA-138 / DSM 3043 / CIP 106854 / NCIMB 13768 / 1H11).